A 649-amino-acid chain; its full sequence is MADVEVPINVITEINNLNELNNVNTGNEASGGISRWLIYTIIVLVVAAVVGLVIFIVKKVNNKKRESGQIIQEVSQVLTENVDKKVANDLLDVALRARTEQAQLEANSATSVQLAAVGKISQSDADMAIKSAADAKIKAEQANIEAAKAIENIRKQELDNANKAVAMATTAAAAISATYQDKSKDIIDNKLREAEETYKQVVQQRQLAEKEYNASLATRRQAERNVYNKKVTEANETIKSVKKTEDVLKVLDDKIKQAKKATDDFKKKKQADKNKPPASKPSPGPKPAPKPSPGPKPAPKPSPGPKPSPGPSACPQFQTRDSKGQCVCDPRQGVTWDGKSCVCDMKNGWNWDGKKCVKGACPQFQTRDSKGQCVCDPKQGVTWDGKGCVCDMKNGWNWDGKKCVKSGGGGGGGNVSGTITLMSNEETAVLNKGTYPGQGGKRYNRQWNVPGNMSDSCLLEFDIFFPSNFWFGCQGKIGGFFLSRPGQRGVASGCAKPGKRTGASYRVMWGGTTYKNGKRVGRDGSGVYPYLYFDDSTNSKQIPKLKQVEDCGHSIMVEEFSRSIKRNAWNNIKIGLKLNTIGQRNGLIYFEVNGQKQTQDQVMWTSSSDFNIKYVIFGTFYGGCTGQNINQIPNTFVKYKNVKISKWSP.

The chain crosses the membrane as a helical span at residues 37–57 (LIYTIIVLVVAAVVGLVIFIV). Positions 184–268 (KDIIDNKLRE…KKATDDFKKK (85 aa)) form a coiled coil. The segment covering 258 to 275 (AKKATDDFKKKKQADKNK) has biased composition (basic and acidic residues). A disordered region spans residues 258-325 (AKKATDDFKK…QFQTRDSKGQ (68 aa)). A compositionally biased stretch (pro residues) spans 278 to 312 (ASKPSPGPKPAPKPSPGPKPAPKPSPGPKPSPGPS). The catalytic stretch occupies residues 407 to 649 (GGGGGGGNVS…KNVKISKWSP (243 aa)).

The cofactor is Ca(2+). Requires Mg(2+) as cofactor.

It is found in the membrane. The protein localises to the virion. With respect to regulation, inhibited by Mn(2+), Cu(2+), Co(2+), Fe(2+), Zn(2+), Ni(2+), EDTA and EGTA. During viral entry, involved in the degradation of the host cell wall at the site of attachment. This Chlorella (PBCV-1) protein is Exolysin.